We begin with the raw amino-acid sequence, 451 residues long: Eukaryotic translation initiation factor 3 subunit E (451 aa).

The PCI domain maps to Pro245–Ser425.

It belongs to the eIF-3 subunit E family. In terms of assembly, component of the eukaryotic translation initiation factor 3 (eIF-3) complex.

Its subcellular location is the cytoplasm. Functionally, component of the eukaryotic translation initiation factor 3 (eIF-3) complex, which is involved in protein synthesis of a specialized repertoire of mRNAs and, together with other initiation factors, stimulates binding of mRNA and methionyl-tRNAi to the 40S ribosome. The eIF-3 complex specifically targets and initiates translation of a subset of mRNAs involved in cell proliferation. The polypeptide is Eukaryotic translation initiation factor 3 subunit E (int6) (Sclerotinia sclerotiorum (strain ATCC 18683 / 1980 / Ss-1) (White mold)).